The chain runs to 290 residues: Ribosomal RNA small subunit methyltransferase A (290 aa).

Asn-27, Leu-29, Gly-54, Glu-75, Asp-100, and Asn-125 together coordinate S-adenosyl-L-methionine.

This sequence belongs to the class I-like SAM-binding methyltransferase superfamily. rRNA adenine N(6)-methyltransferase family. RsmA subfamily.

It is found in the cytoplasm. It catalyses the reaction adenosine(1518)/adenosine(1519) in 16S rRNA + 4 S-adenosyl-L-methionine = N(6)-dimethyladenosine(1518)/N(6)-dimethyladenosine(1519) in 16S rRNA + 4 S-adenosyl-L-homocysteine + 4 H(+). Specifically dimethylates two adjacent adenosines (A1518 and A1519) in the loop of a conserved hairpin near the 3'-end of 16S rRNA in the 30S particle. May play a critical role in biogenesis of 30S subunits. The polypeptide is Ribosomal RNA small subunit methyltransferase A (Streptococcus pneumoniae (strain Hungary19A-6)).